We begin with the raw amino-acid sequence, 261 residues long: Probable cyclic nucleotide phosphodiesterase PSM_A2567 (261 aa).

Residues D22, H24, D62, N94, H160, H198, and H200 each contribute to the Fe cation site. AMP-binding positions include H24, D62, and 94-95 (NH). Residue H200 participates in AMP binding.

Belongs to the cyclic nucleotide phosphodiesterase class-III family. Requires Fe(2+) as cofactor.

The chain is Probable cyclic nucleotide phosphodiesterase PSM_A2567 from Pseudoalteromonas sp. (strain SM9913).